Consider the following 527-residue polypeptide: T-complex protein 1 subunit beta (527 aa).

The protein belongs to the TCP-1 chaperonin family. In terms of assembly, heterooligomeric complex of about 850 to 900 kDa that forms two stacked rings, 12 to 16 nm in diameter.

The protein resides in the cytoplasm. Its function is as follows. Molecular chaperone; assists the folding of proteins upon ATP hydrolysis. Known to play a role, in vitro, in the folding of actin and tubulin. This Arabidopsis thaliana (Mouse-ear cress) protein is T-complex protein 1 subunit beta.